The sequence spans 385 residues: Multidrug resistance protein MdtE (385 aa).

Residues 1-20 (MNRRRKLLIPLLFCGAMLTA) form the signal peptide. Residue cysteine 21 is the site of N-palmitoyl cysteine attachment. A lipid anchor (S-diacylglycerol cysteine) is attached at cysteine 21.

This sequence belongs to the membrane fusion protein (MFP) (TC 8.A.1) family. Homotrimer. Part of the tripartite efflux system MdtEF-TolC, which is composed of an inner membrane transporter, MdtF, a membrane fusion protein, MdtE, and an outer membrane component, TolC. The complex forms a large protein conduit and can translocate molecules across both the inner and outer membranes.

It localises to the cell inner membrane. In terms of biological role, part of the tripartite efflux system MdtEF-TolC, which confers resistance to various compounds. This chain is Multidrug resistance protein MdtE (mdtE), found in Escherichia coli O157:H7.